A 182-amino-acid polypeptide reads, in one-letter code: ATP-dependent protease subunit HslV (182 aa).

T12 is a catalytic residue. Positions 167, 170, and 173 each coordinate Na(+).

The protein belongs to the peptidase T1B family. HslV subfamily. In terms of assembly, a double ring-shaped homohexamer of HslV is capped on each side by a ring-shaped HslU homohexamer. The assembly of the HslU/HslV complex is dependent on binding of ATP.

It is found in the cytoplasm. The enzyme catalyses ATP-dependent cleavage of peptide bonds with broad specificity.. With respect to regulation, allosterically activated by HslU binding. Its function is as follows. Protease subunit of a proteasome-like degradation complex believed to be a general protein degrading machinery. In Paramagnetospirillum magneticum (strain ATCC 700264 / AMB-1) (Magnetospirillum magneticum), this protein is ATP-dependent protease subunit HslV.